The sequence spans 436 residues: GTPase Der (436 aa).

2 EngA-type G domains span residues 4-167 (PVIA…PTDL) and 175-351 (IKFS…ENQN). GTP is bound by residues 10 to 17 (GRPNVGKS), 57 to 61 (DTGGI), 119 to 122 (NKAD), 181 to 188 (GRPNVGKS), 229 to 233 (DTAGI), and 294 to 297 (NKWD). Residues 352 to 436 (RRIQSALLND…PIHLIPRQRK (85 aa)) enclose the KH-like domain.

The protein belongs to the TRAFAC class TrmE-Era-EngA-EngB-Septin-like GTPase superfamily. EngA (Der) GTPase family. Associates with the 50S ribosomal subunit.

Its function is as follows. GTPase that plays an essential role in the late steps of ribosome biogenesis. The polypeptide is GTPase Der (Latilactobacillus sakei subsp. sakei (strain 23K) (Lactobacillus sakei subsp. sakei)).